The sequence spans 551 residues: Cleavage and polyadenylation specificity factor subunit 6 (551 aa).

One can recognise an RRM domain in the interval 81 to 161; sequence IALYIGNLTW…QNPVVTPCNK (81 aa). Thr157 carries the post-translational modification Phosphothreonine. Polar residues predominate over residues 169–180; that stretch reads MQSRKTTQSGQM. Disordered regions lie at residues 169 to 410 and 477 to 551; these read MQSR…TPLS and LHGI…YRHR. 3 stretches are compositionally biased toward pro residues: residues 237–265, 285–366, and 377–388; these read TRPPLGPPGPPGPPGPPPPGQVLPPPLAG, GQPP…PPPA, and GPPPTDPYGRPP. 2 stretches are compositionally biased toward basic and acidic residues: residues 389–404 and 489–503; these read PYDRGDYGPPGREMDA and SRRERSRERDHSRSR. 5 positions are modified to phosphoserine: Ser494, Ser500, Ser511, Ser513, and Ser525. A compositionally biased stretch (basic residues) spans 504–514; the sequence is EKSRRHKSRSR. The span at 515-551 shows a compositional bias: basic and acidic residues; it reads DRHDDYYRERSRERERHRDRDRDRDRERDREREYRHR.

It belongs to the RRM CPSF6/7 family. In terms of assembly, component of the cleavage factor Im (CFIm) complex.

The protein localises to the nucleus. It is found in the nucleoplasm. Its subcellular location is the nucleus speckle. It localises to the cytoplasm. Functionally, component of the cleavage factor Im (CFIm) complex that functions as an activator of the pre-mRNA 3'-end cleavage and polyadenylation processing required for the maturation of pre-mRNA into functional mRNAs. CFIm contributes to the recruitment of multiprotein complexes on specific sequences on the pre-mRNA 3'-end, so called cleavage and polyadenylation signals (pA signals). Most pre-mRNAs contain multiple pA signals, resulting in alternative cleavage and polyadenylation (APA) producing mRNAs with variable 3'-end formation. The CFIm complex acts as a key regulator of cleavage and polyadenylation site choice during APA through its binding to 5'-UGUA-3' elements localized in the 3'-untranslated region (UTR) for a huge number of pre-mRNAs. Plays a role in mRNA export. The sequence is that of Cleavage and polyadenylation specificity factor subunit 6 from Gallus gallus (Chicken).